The sequence spans 181 residues: MSSLLQGVNLYLIGMMGAGKTTVGHLLAQELGYGFLDTDNVIAQAAKKSINEIFAEAGEAGFRQIESDVLAQVCSYTKLTVATGGGIVLRRENWSYLHHGLIVWLDVSVDILYARLAADTTRPLLQDDDPKGKLRSLLEQRTPLYSQADLRICVNAEETPEQIANKIMQVIPSVLKQTTAN.

17-22 (GAGKTT) lines the ATP pocket. Threonine 21 is a binding site for Mg(2+). Substrate contacts are provided by aspartate 39, arginine 63, and glycine 85. Arginine 122 contributes to the ATP binding site. Arginine 141 contributes to the substrate binding site.

This sequence belongs to the shikimate kinase family. In terms of assembly, monomer. Mg(2+) serves as cofactor.

The protein resides in the cytoplasm. The catalysed reaction is shikimate + ATP = 3-phosphoshikimate + ADP + H(+). The protein operates within metabolic intermediate biosynthesis; chorismate biosynthesis; chorismate from D-erythrose 4-phosphate and phosphoenolpyruvate: step 5/7. Functionally, catalyzes the specific phosphorylation of the 3-hydroxyl group of shikimic acid using ATP as a cosubstrate. The sequence is that of Shikimate kinase from Trichormus variabilis (strain ATCC 29413 / PCC 7937) (Anabaena variabilis).